We begin with the raw amino-acid sequence, 1150 residues long: uncharacterized protein (1150 aa).

The protein belongs to the TMEM1 family.

This is an uncharacterized protein from Schizosaccharomyces pombe (strain 972 / ATCC 24843) (Fission yeast).